The sequence spans 159 residues: Flagellar assembly factor FliW (159 aa).

This sequence belongs to the FliW family. In terms of assembly, interacts with translational regulator CsrA and flagellin(s).

The protein localises to the cytoplasm. Functionally, acts as an anti-CsrA protein, binds CsrA and prevents it from repressing translation of its target genes, one of which is flagellin. Binds to flagellin and participates in the assembly of the flagellum. This Geobacter sulfurreducens (strain ATCC 51573 / DSM 12127 / PCA) protein is Flagellar assembly factor FliW.